A 231-amino-acid polypeptide reads, in one-letter code: MKFFVDTADLAEIRDLAATGLLDGVTTNPSLVARTGRPFVDLVAEICDVVSGPVSAEVAATDAETMLKEGRHLARIAPNVAVKVPLTPAGLKVCRTLANEGTMVNVTLCFSAAQAILAAKAGAAFVSPFVGRLDDIGQTGLNLIAEIVEIYDRYPAFTTEVLVASIRNPTHVTESARLGAHVATMPPAVIRQLFAHPLTDKGLSQFVADWQKTGQNILEQAIPDRSGQDRA.

The active-site Schiff-base intermediate with substrate is lysine 83.

It belongs to the transaldolase family. Type 3B subfamily.

The protein localises to the cytoplasm. The catalysed reaction is D-sedoheptulose 7-phosphate + D-glyceraldehyde 3-phosphate = D-erythrose 4-phosphate + beta-D-fructose 6-phosphate. Its pathway is carbohydrate degradation; pentose phosphate pathway; D-glyceraldehyde 3-phosphate and beta-D-fructose 6-phosphate from D-ribose 5-phosphate and D-xylulose 5-phosphate (non-oxidative stage): step 2/3. Transaldolase is important for the balance of metabolites in the pentose-phosphate pathway. The protein is Probable transaldolase of Rhodospirillum centenum (strain ATCC 51521 / SW).